Consider the following 226-residue polypeptide: Ribosomal RNA small subunit methyltransferase Nep1 (226 aa).

Residues Gly-176, Gly-181, and 197 to 202 each bind S-adenosyl-L-methionine; that span reads IYEESL.

The protein belongs to the class IV-like SAM-binding methyltransferase superfamily. RNA methyltransferase NEP1 family. As to quaternary structure, homodimer.

It carries out the reaction a pseudouridine in rRNA + S-adenosyl-L-methionine = an N(1)-methylpseudouridine in rRNA + S-adenosyl-L-homocysteine + H(+). Functionally, methyltransferase involved in ribosomal biogenesis. Specifically catalyzes the N1-methylation of the pseudouridine corresponding to position 914 in M.jannaschii 16S rRNA. The chain is Ribosomal RNA small subunit methyltransferase Nep1 from Methanothrix thermoacetophila (strain DSM 6194 / JCM 14653 / NBRC 101360 / PT) (Methanosaeta thermophila).